The primary structure comprises 189 residues: Probable DNA-directed RNA polymerase subunit delta (189 aa).

The 68-residue stretch at 14–81 folds into the HTH HARE-type domain; that stretch reads LSMIEVAHAI…GENVWALRTW (68 aa). Acidic residues-rich tracts occupy residues 90-100 and 118-189; these read EVDHPEDDGDE and EGDD…EDEE. The segment at 90-189 is disordered; the sequence is EVDHPEDDGD…DDLDDDEDEE (100 aa).

Belongs to the RpoE family. As to quaternary structure, RNAP is composed of a core of 2 alpha, a beta and a beta' subunits. The core is associated with a delta subunit and one of several sigma factors.

Participates in both the initiation and recycling phases of transcription. In the presence of the delta subunit, RNAP displays an increased specificity of transcription, a decreased affinity for nucleic acids, and an increased efficiency of RNA synthesis because of enhanced recycling. In Lactobacillus delbrueckii subsp. bulgaricus (strain ATCC BAA-365 / Lb-18), this protein is Probable DNA-directed RNA polymerase subunit delta.